A 108-amino-acid chain; its full sequence is Peptidyl-prolyl cis-trans isomerase FKBP1C (108 aa).

The PPIase FKBP-type domain occupies 20–108 (SQTCVMHYTG…VFDVELLKLE (89 aa)).

Belongs to the FKBP-type PPIase family. FKBP1 subfamily.

It catalyses the reaction [protein]-peptidylproline (omega=180) = [protein]-peptidylproline (omega=0). In terms of biological role, catalyzes the cis-trans isomerization of proline imidic peptide bonds in oligopeptides. This Homo sapiens (Human) protein is Peptidyl-prolyl cis-trans isomerase FKBP1C.